The sequence spans 127 residues: Large ribosomal subunit protein bL19 (127 aa).

This sequence belongs to the bacterial ribosomal protein bL19 family.

In terms of biological role, this protein is located at the 30S-50S ribosomal subunit interface and may play a role in the structure and function of the aminoacyl-tRNA binding site. This is Large ribosomal subunit protein bL19 from Cupriavidus pinatubonensis (strain JMP 134 / LMG 1197) (Cupriavidus necator (strain JMP 134)).